A 60-amino-acid chain; its full sequence is Large ribosomal subunit protein uL30 (60 aa).

This sequence belongs to the universal ribosomal protein uL30 family. Part of the 50S ribosomal subunit.

This Burkholderia mallei (strain NCTC 10247) protein is Large ribosomal subunit protein uL30.